A 178-amino-acid polypeptide reads, in one-letter code: Single-stranded DNA-binding protein DdrB (178 aa).

The interval 139–178 (RYAVPGSNRPQAGAPARSAATRAQGARPGAVAVQDEETPF) is disordered. Low complexity predominate over residues 147-165 (RPQAGAPARSAATRAQGAR).

As to quaternary structure, homopentamer; arranged in a ring-structure.

Functionally, ssDNA-binding protein that probably contributes to the ionizing radiation resistance of D.geothermalis. Plays a role in DNA repair and genome reconstitution, in a RecA-independent process, and is necessary for recovery from severe genomic fragmentation as a result of exposure to severe levels of ionizing radiation. Binds single-stranded DNA but not duplex DNA. This chain is Single-stranded DNA-binding protein DdrB (ddrB), found in Deinococcus geothermalis (strain DSM 11300 / CIP 105573 / AG-3a).